The sequence spans 213 residues: Immunoglobulin lambda-like polypeptide 1 (213 aa).

Residues 1 to 37 (MRPGTGQGGLEAPGEPGPNLRQRWPLLLLGLAVVTHG) form the signal peptide. The j region stretch occupies residues 97–108 (VFGSGTQLTVLS). The c region stretch occupies residues 109–213 (QPKATPSVTL…EKTVAPAECS (105 aa)). Residues 114-208 (PSVTLFPPSS…EGSTVEKTVA (95 aa)) form the Ig-like C1-type domain. Cys135 and Cys194 are disulfide-bonded.

In terms of assembly, associates non-covalently with VPREB1. Interacts with SYNV1/HRD1 (via N-terminus); this interaction leads to increased IGLL1 ubiquitination and degradation in pre-B cells, possibly through a lysosomal, not proteasomal, pathway. In terms of tissue distribution, expressed only in pre-B-cells and a special B-cell line (which is surface Ig negative).

The protein localises to the endoplasmic reticulum. Its subcellular location is the secreted. Its function is as follows. Critical for B-cell development. The polypeptide is Immunoglobulin lambda-like polypeptide 1 (IGLL1) (Homo sapiens (Human)).